The following is a 426-amino-acid chain: Glutamyl-tRNA reductase (426 aa).

Substrate is bound by residues 49–52 (TCNR), Ser-109, 114–116 (EGQ), and Gln-120. The Nucleophile role is filled by Cys-50. Residue 189–194 (GAGETG) participates in NADP(+) binding.

It belongs to the glutamyl-tRNA reductase family. In terms of assembly, homodimer.

It carries out the reaction (S)-4-amino-5-oxopentanoate + tRNA(Glu) + NADP(+) = L-glutamyl-tRNA(Glu) + NADPH + H(+). The protein operates within porphyrin-containing compound metabolism; protoporphyrin-IX biosynthesis; 5-aminolevulinate from L-glutamyl-tRNA(Glu): step 1/2. Its pathway is porphyrin-containing compound metabolism; chlorophyll biosynthesis. In terms of biological role, catalyzes the NADPH-dependent reduction of glutamyl-tRNA(Glu) to glutamate 1-semialdehyde (GSA). This Chlorobium chlorochromatii (strain CaD3) protein is Glutamyl-tRNA reductase.